A 496-amino-acid polypeptide reads, in one-letter code: Cytochrome P450 71D18 (496 aa).

Residues 2 to 22 form a helical; Signal-anchor for type II membrane protein membrane-spanning segment; it reads ELDLLSAIIILVATYIVSLLI. Cys-436 lines the heme pocket.

It belongs to the cytochrome P450 family. Heme is required as a cofactor.

Its subcellular location is the endoplasmic reticulum membrane. It carries out the reaction (4S)-limonene + reduced [NADPH--hemoprotein reductase] + O2 = (1S,5R)-carveol + oxidized [NADPH--hemoprotein reductase] + H2O + H(+). In terms of biological role, hydroxylates (-)-(4S)-limonene to (-)-trans-carveol, a precursor of (-)-carvone. Fluorinated substrate analogs are hydroxylated with the same regio- and stereochemistry. This chain is Cytochrome P450 71D18 (CYP71D18), found in Mentha gracilis (Gingermint).